The sequence spans 551 residues: MFS-type transporter ATEG_00331 (551 aa).

A signal peptide spans 1-18 (MKAWLLVSSLCLSTFIAA). A run of 4 helical transmembrane segments spans residues 40–60 (LEFT…TPPW), 71–91 (PVLM…ALAI), 102–122 (IQGT…GDVF), and 132–152 (GVLG…GGAF). N-linked (GlcNAc...) asparagine glycosylation is found at asparagine 165 and asparagine 178. 8 consecutive transmembrane segments (helical) span residues 179 to 199 (LTTS…FLEV), 206 to 228 (IIEG…TVMF), 233 to 255 (GYGG…FGIG), 324 to 344 (VYLL…GLYI), 354 to 374 (IYFG…LQPY), 380 to 400 (IIIF…APII), 417 to 437 (TVFF…GVIF), and 493 to 513 (SEWI…VFIS). A glycan (N-linked (GlcNAc...) asparagine) is linked at asparagine 524.

It belongs to the major facilitator superfamily. TCR/Tet family.

It is found in the membrane. Its function is as follows. MFS-type transporter; part of the gene cluster that mediates the biosynthesis of isoflavipucine. The protein is MFS-type transporter ATEG_00331 of Aspergillus terreus (strain NIH 2624 / FGSC A1156).